The sequence spans 200 residues: Urease accessory protein UreG (200 aa).

11-18 (GPVGSGKT) provides a ligand contact to GTP.

The protein belongs to the SIMIBI class G3E GTPase family. UreG subfamily. Homodimer. UreD, UreF and UreG form a complex that acts as a GTP-hydrolysis-dependent molecular chaperone, activating the urease apoprotein by helping to assemble the nickel containing metallocenter of UreC. The UreE protein probably delivers the nickel.

It is found in the cytoplasm. Facilitates the functional incorporation of the urease nickel metallocenter. This process requires GTP hydrolysis, probably effectuated by UreG. The chain is Urease accessory protein UreG from Thermosynechococcus vestitus (strain NIES-2133 / IAM M-273 / BP-1).